The chain runs to 238 residues: Probable transcriptional regulatory protein YeeN (238 aa).

This sequence belongs to the TACO1 family. YeeN subfamily.

Its subcellular location is the cytoplasm. The polypeptide is Probable transcriptional regulatory protein YeeN (Salmonella typhi).